The primary structure comprises 358 residues: Cyclin-dependent kinase 10 (358 aa).

One can recognise a Protein kinase domain in the interval 37 to 321 (FEKLNRIGEG…AGDCLESSYF (285 aa)). ATP is bound by residues 43-51 (IGEGTYGIV) and Lys66. Asp161 acts as the Proton acceptor in catalysis. Residue Thr194 is modified to Phosphothreonine. The segment at 332–358 (LMPTFPHHRNKRAAPAATEGQSKRCRP) is disordered.

This sequence belongs to the protein kinase superfamily. CMGC Ser/Thr protein kinase family. CDC2/CDKX subfamily. In terms of assembly, heterodimer with CCNQ, the interaction is required for kinase activity. Interacts with ETS2. Interacts with PRK2.

It localises to the cytoplasm. The protein resides in the cytoskeleton. The protein localises to the cilium basal body. It catalyses the reaction L-seryl-[protein] + ATP = O-phospho-L-seryl-[protein] + ADP + H(+). The catalysed reaction is L-threonyl-[protein] + ATP = O-phospho-L-threonyl-[protein] + ADP + H(+). Functionally, cyclin-dependent kinase that phosphorylates the transcription factor ETS2 (in vitro) and positively controls its proteasomal degradation (in cells). Involved in the regulation of actin cytoskeleton organization through the phosphorylation of actin dynamics regulators such as PKN2. Is a negative regulator of ciliogenesis through phosphorylation of PKN2 and promotion of RhoA signaling. The polypeptide is Cyclin-dependent kinase 10 (Cdk10) (Rattus norvegicus (Rat)).